A 276-amino-acid chain; its full sequence is Putative pyruvate, phosphate dikinase regulatory protein (276 aa).

152–159 (GISRTSKT) serves as a coordination point for ADP.

Belongs to the pyruvate, phosphate/water dikinase regulatory protein family. PDRP subfamily.

The catalysed reaction is N(tele)-phospho-L-histidyl/L-threonyl-[pyruvate, phosphate dikinase] + ADP = N(tele)-phospho-L-histidyl/O-phospho-L-threonyl-[pyruvate, phosphate dikinase] + AMP + H(+). It carries out the reaction N(tele)-phospho-L-histidyl/O-phospho-L-threonyl-[pyruvate, phosphate dikinase] + phosphate + H(+) = N(tele)-phospho-L-histidyl/L-threonyl-[pyruvate, phosphate dikinase] + diphosphate. Its function is as follows. Bifunctional serine/threonine kinase and phosphorylase involved in the regulation of the pyruvate, phosphate dikinase (PPDK) by catalyzing its phosphorylation/dephosphorylation. In Staphylococcus carnosus (strain TM300), this protein is Putative pyruvate, phosphate dikinase regulatory protein.